Consider the following 1997-residue polypeptide: Otoferlin (1997 aa).

Residues 1 to 98 enclose the C2 1 domain; that stretch reads MALIVHLKTV…VEENRVEVTD (98 aa). Residues 1–1963 lie on the Cytoplasmic side of the membrane; the sequence is MALIVHLKTV…ARYFLWHTYR (1963 aa). A disordered region spans residues 140-167; the sequence is QEEKDSQETDGLLPGSRPSTRISGEKSF. C2 domains are found at residues 235-356 and 399-530; these read KRSK…HKWA and IEGN…FLPT. Positions 643–692 are disordered; the sequence is VDGMSRPLRPRPRKEPGDEEEVDLIQNSSDDEGDEAGDLASVSSTPPMRP. Positions 659-679 are enriched in acidic residues; sequence GDEEEVDLIQNSSDDEGDEAG. The stretch at 791 to 820 forms a coiled coil; the sequence is RERLKSCMRELESMGQQAKSLRAQVKRHTV. C2 domains are found at residues 943–1068 and 1115–1241; these read LHSF…PPRF and RGPI…PNWN. The Ca(2+) site is built by D975, D981, D1037, D1039, and D1045. 3 disordered regions span residues 1253 to 1272, 1296 to 1326, and 1343 to 1402; these read LRNG…SMEP, DVAE…ESML, and LRQH…EKKK. Acidic residues-rich tracts occupy residues 1314–1325 and 1352–1361; these read EEPEEEEPDESM and DLEEKEEMES. Positions 1370–1383 are enriched in basic and acidic residues; it reads KSKEKSRAAKEEKK. C2 domains follow at residues 1464-1593 and 1714-1865; these read LPED…ATCG and DMPA…KQCT. The Ca(2+) site is built by D1508, D1514, D1563, D1565, D1571, D1836, S1839, and D1842. A helical transmembrane segment spans residues 1964 to 1984; that stretch reads WLLLKFLLLFLLLLLFALFLY. The Extracellular portion of the chain corresponds to 1985–1997; sequence SLPGYLAKKILGA.

This sequence belongs to the ferlin family. Interacts with SNAP25; the interaction is direct. Interacts with STX1; the interaction is direct. Interacts with RAB8B. The cofactor is Ca(2+). In terms of tissue distribution, isoform 1 is expressed in cochlea and brain. Expressed in the cochlear and vestibular hair cells. Expressed in both inner and outer hair cells (IHCs and OHCs) and cochlear ganglions neurons at postnatal day 2 (P2) and 6 (P6). Expressed only in IHCs at postnatal day 60 (P60) (at protein level). Strongly expressed in brain and inner ear. In the inner ear, it is mainly expressed in the cochlear IHC and vestibular type I sensory hair cells. Weakly expressed in eye, heart, skeletal muscle, liver, kidney, lung and testis.

Its subcellular location is the cytoplasmic vesicle. The protein localises to the secretory vesicle. It localises to the synaptic vesicle membrane. It is found in the basolateral cell membrane. The protein resides in the endoplasmic reticulum membrane. Its subcellular location is the golgi apparatus membrane. The protein localises to the presynaptic cell membrane. It localises to the cell membrane. Key calcium ion sensor involved in the Ca(2+)-triggered synaptic vesicle-plasma membrane fusion and in the control of neurotransmitter release at these output synapses. Interacts in a calcium-dependent manner to the presynaptic SNARE proteins at ribbon synapses of cochlear inner hair cells (IHCs) to trigger exocytosis of neurotransmitter. Also essential to synaptic exocytosis in immature outer hair cells (OHCs). May also play a role within the recycling of endosomes. The protein is Otoferlin (Otof) of Mus musculus (Mouse).